The primary structure comprises 187 residues: MITGLALSRVAFGLTAFLLLAVVSSQEKCSNTCIAQNCNSLGIRYGKYCGIGYFGCPGEPPCDDLDACCMTHDNCVDLKGMTYVNCHKQFKRCVNKLSKSIKHSNGEKIGFSTQCPYSIVIPTVFNGMDYGIFFSGIGNIFNPPVLGSVPVVEVDLARSKVDTKDGLGTKLGLQTKEGSKVSASLNI.

The N-terminal stretch at 1 to 25 is a signal peptide; it reads MITGLALSRVAFGLTAFLLLAVVSS. 6 cysteine pairs are disulfide-bonded: Cys-29–Cys-56, Cys-33–Cys-62, Cys-38–Cys-115, Cys-49–Cys-69, Cys-68–Cys-93, and Cys-75–Cys-86. Residues Tyr-48, Gly-50, and Tyr-53 each contribute to the Ca(2+) site. His-72 is a catalytic residue. Position 73 (Asp-73) interacts with Ca(2+).

It belongs to the phospholipase A2 family. The cofactor is Ca(2+). As to expression, strongly expressed in mature flowers but weakly expressed in other tissues. Detected in buds, open flowers and in pollen.

It is found in the secreted. The protein localises to the golgi apparatus. It localises to the trans-Golgi network. The protein resides in the endoplasmic reticulum. It catalyses the reaction a 1,2-diacyl-sn-glycero-3-phosphocholine + H2O = a 1-acyl-sn-glycero-3-phosphocholine + a fatty acid + H(+). In terms of biological role, PA2 catalyzes the calcium-dependent hydrolysis of the 2-acyl groups in 3-sn-phosphoglycerides. Releases lysophospholipids (LPLs) and free fatty acids (FFAs) from membrane phospholipids in response to hormones and other external stimuli. Plays a role in pollen development and germination and tube growth. This Arabidopsis thaliana (Mouse-ear cress) protein is Phospholipase A2-gamma (PLA2-GAMMA).